The following is a 486-amino-acid chain: Vicilin-like seed storage protein At3g22640 (486 aa).

The first 22 residues, 1–22 (MAITNKLIITLLLLISIAVVHC), serve as a signal peptide directing secretion. The tract at residues 34 to 60 (PPQQGEQEGPRRRPGGGSGEGWEEEST) is disordered. 2 consecutive Cupin type-1 domains span residues 64-223 (YHFR…ELLG) and 278-448 (FNLF…KVAE). N-linked (GlcNAc...) asparagine glycans are attached at residues Asn168, Asn316, and Asn455.

It belongs to the 7S seed storage protein family. As to expression, predominantly expressed in the embryo and endosperm of developing seeds. Also present in seedlings.

In terms of biological role, seed storage protein. Its function is as follows. (Microbial infection) Involved in tobacco mosaic virus (TMV) replication. Required for endoplasmic reticulum (ER) aggregations mediated by TMV main replicase (P126) upon viral infection. The protein is Vicilin-like seed storage protein At3g22640 of Arabidopsis thaliana (Mouse-ear cress).